The following is a 216-amino-acid chain: Phosphoribosylaminoimidazole-succinocarboxamide synthase (216 aa).

It belongs to the SAICAR synthetase family.

The catalysed reaction is 5-amino-1-(5-phospho-D-ribosyl)imidazole-4-carboxylate + L-aspartate + ATP = (2S)-2-[5-amino-1-(5-phospho-beta-D-ribosyl)imidazole-4-carboxamido]succinate + ADP + phosphate + 2 H(+). It participates in purine metabolism; IMP biosynthesis via de novo pathway; 5-amino-1-(5-phospho-D-ribosyl)imidazole-4-carboxamide from 5-amino-1-(5-phospho-D-ribosyl)imidazole-4-carboxylate: step 1/2. The polypeptide is Phosphoribosylaminoimidazole-succinocarboxamide synthase (purC) (Aquifex aeolicus (strain VF5)).